Here is a 229-residue protein sequence, read N- to C-terminus: Demethylmenaquinone methyltransferase (229 aa).

S-adenosyl-L-methionine-binding positions include threonine 57, aspartate 77, and 101-102 (DV).

It belongs to the class I-like SAM-binding methyltransferase superfamily. MenG/UbiE family.

The catalysed reaction is a 2-demethylmenaquinol + S-adenosyl-L-methionine = a menaquinol + S-adenosyl-L-homocysteine + H(+). The protein operates within quinol/quinone metabolism; menaquinone biosynthesis; menaquinol from 1,4-dihydroxy-2-naphthoate: step 2/2. Methyltransferase required for the conversion of demethylmenaquinol (DMKH2) to menaquinol (MKH2). The sequence is that of Demethylmenaquinone methyltransferase from Chlamydia trachomatis serovar A (strain ATCC VR-571B / DSM 19440 / HAR-13).